A 245-amino-acid chain; its full sequence is Phosphoribosylaminoimidazole-succinocarboxamide synthase (245 aa).

The protein belongs to the SAICAR synthetase family.

The enzyme catalyses 5-amino-1-(5-phospho-D-ribosyl)imidazole-4-carboxylate + L-aspartate + ATP = (2S)-2-[5-amino-1-(5-phospho-beta-D-ribosyl)imidazole-4-carboxamido]succinate + ADP + phosphate + 2 H(+). Its pathway is purine metabolism; IMP biosynthesis via de novo pathway; 5-amino-1-(5-phospho-D-ribosyl)imidazole-4-carboxamide from 5-amino-1-(5-phospho-D-ribosyl)imidazole-4-carboxylate: step 1/2. This is Phosphoribosylaminoimidazole-succinocarboxamide synthase from Trichormus variabilis (strain ATCC 29413 / PCC 7937) (Anabaena variabilis).